A 319-amino-acid chain; its full sequence is 1-aminocyclopropane-1-carboxylate oxidase (319 aa).

In terms of domain architecture, Fe2OG dioxygenase spans 153-253 (PTFGTKVSNY…RMSIASFYNP (101 aa)). The Fe cation site is built by histidine 177, aspartate 179, and histidine 234.

This sequence belongs to the iron/ascorbate-dependent oxidoreductase family. Fe cation is required as a cofactor.

It catalyses the reaction 1-aminocyclopropane-1-carboxylate + L-ascorbate + O2 = ethene + L-dehydroascorbate + hydrogen cyanide + CO2 + 2 H2O. It participates in alkene biosynthesis; ethylene biosynthesis via S-adenosyl-L-methionine; ethylene from S-adenosyl-L-methionine: step 2/2. The polypeptide is 1-aminocyclopropane-1-carboxylate oxidase (ACO1) (Prunus mume (Japanese apricot)).